The primary structure comprises 437 residues: Elongation factor 1-gamma (437 aa).

An N-acetylalanine modification is found at A2. In terms of domain architecture, GST N-terminal spans 2–87 (AAGTLYTYPE…YVSNEELRGS (86 aa)). Positions 88–216 (TPEAAAQVVQ…VKLCEKMAQF (129 aa)) constitute a GST C-terminal domain. N6-acetyllysine occurs at positions 147 and 212. The segment covering 221–254 (FAETQPKKDTPRKEKGSREEKQKPQAERKEEKKA) has biased composition (basic and acidic residues). The segment at 221 to 268 (FAETQPKKDTPRKEKGSREEKQKPQAERKEEKKAAAPAPEEEMDECEQ) is disordered. A Glycyl lysine isopeptide (Lys-Gly) (interchain with G-Cter in SUMO1) cross-link involves residue K253. In terms of domain architecture, EF-1-gamma C-terminal spans 276 to 437 (AKDPFAHLPK…KAFNQGKIFK (162 aa)). A Glycyl lysine isopeptide (Lys-Gly) (interchain with G-Cter in SUMO2) cross-link involves residue K285. K401 carries the post-translational modification N6-acetyllysine. K434 bears the N6-acetyllysine; alternate mark. Position 434 is an N6-malonyllysine; alternate (K434).

As to quaternary structure, EF-1 is composed of four subunits: alpha, beta, delta, and gamma.

Probably plays a role in anchoring the complex to other cellular components. This chain is Elongation factor 1-gamma (EEF1G), found in Macaca fascicularis (Crab-eating macaque).